Here is a 533-residue protein sequence, read N- to C-terminus: Putative adhesin domain-containing protein LiaX (533 aa).

Residues 1–277 (MKERERVLEL…EFNYPNPQAS (277 aa)) form a binds the antibiotic daptomycin (DAP) and the antimicrobial peptide human LL-37, under physiologically relevant concentrations. Protects the OG1RF and S613 strains from LL-37-mediated killing in a concentration-dependent manner region. The segment at 63 to 89 (NALEKGESEGPTVDSFEENTQDSAEKD) is disordered. Positions 83 to 186 (QDSAEKDREN…EEELKNIRKE (104 aa)) form a coiled coil. The interval 279-526 (IDVKVANGTV…INASTTTGSI (248 aa)) is putative adhesin region. Positions 289-526 (VFKTWDQEDV…INASTTTGSI (238 aa)) are involved in cell membrane remodeling.

May undergo proteolytic cleavage, allowing release of the N-terminal region into the extracellular environment.

It localises to the secreted. The protein resides in the cell wall. Its subcellular location is the cell membrane. In terms of biological role, involved in cell membrane remodeling, perhaps acting by negative modulation of the liaFSR and liaXYZ gene clusters, thereby regulating content and localization of anionic phospholipids. Binds to the antibiotic daptomycin (DAP) and to cationic antimicrobial peptides, such as human LL-37, perhaps functioning as a sensor that activates the cell envelope stress response. This is Putative adhesin domain-containing protein LiaX from Enterococcus faecalis (strain ATCC 700802 / V583).